Reading from the N-terminus, the 316-residue chain is tRNA dimethylallyltransferase (316 aa).

Residue 17 to 24 coordinates ATP; that stretch reads GPTASGKT. Residue 19–24 participates in substrate binding; sequence TASGKT. 3 interaction with substrate tRNA regions span residues 42 to 45, 166 to 170, and 247 to 252; these read DSAL, QRLSR, and RCVGYR.

It belongs to the IPP transferase family. In terms of assembly, monomer. Requires Mg(2+) as cofactor.

It carries out the reaction adenosine(37) in tRNA + dimethylallyl diphosphate = N(6)-dimethylallyladenosine(37) in tRNA + diphosphate. Catalyzes the transfer of a dimethylallyl group onto the adenine at position 37 in tRNAs that read codons beginning with uridine, leading to the formation of N6-(dimethylallyl)adenosine (i(6)A). The chain is tRNA dimethylallyltransferase from Salmonella paratyphi A (strain ATCC 9150 / SARB42).